The chain runs to 366 residues: MNKIALYCRPGFEKECAAEITDKAGQKEIYGFARVKDNSGYVLFECYQHEDADRLIREIPFRELIFARQMLVVGELLRDLPPEDRVSPIVGMLHGVIERAGDLRVEVPDTNESKELLKFCRKFTVPLRNAMRQEKILQIRENTKRPVIHVFFIAPGCCYVGYSYSHNNSPFYMGIPRLKFPSDAPSRSTLKLEEAFHVFIPYDEWEERLASGLYAVDLGACPGGWTYQLVKRSMMVHAVDNGPMSQSLMDTGQVRHHKVDGFKFEPLVKNIYWLVCDMVEKPAKVTQLMADWLVNGWCREAIFNLKLPMKKRYEEVAHNLQKMNLQLKENGINAQIQAKHLYHDREEITVHVRRIWSAYAASRNND.

S-adenosyl-L-methionine contacts are provided by residues Ser188, 221-224 (CPGG), Asp240, Asp260, and Asp277. Catalysis depends on Lys306, which acts as the Proton acceptor.

The protein belongs to the class I-like SAM-binding methyltransferase superfamily. RNA methyltransferase RlmE family. RlmM subfamily. As to quaternary structure, monomer.

It localises to the cytoplasm. The enzyme catalyses cytidine(2498) in 23S rRNA + S-adenosyl-L-methionine = 2'-O-methylcytidine(2498) in 23S rRNA + S-adenosyl-L-homocysteine + H(+). Catalyzes the 2'-O-methylation at nucleotide C2498 in 23S rRNA. The sequence is that of Ribosomal RNA large subunit methyltransferase M from Photorhabdus asymbiotica subsp. asymbiotica (strain ATCC 43949 / 3105-77) (Xenorhabdus luminescens (strain 2)).